Consider the following 93-residue polypeptide: Cobalt transport protein CbiN (93 aa).

2 consecutive transmembrane segments (helical) span residues 5–25 (LILLAMVVALMILPFFINHGG) and 63–83 (LLFTLQGSLGAAVIFYILGYA).

The protein belongs to the CbiN family. As to quaternary structure, forms an energy-coupling factor (ECF) transporter complex composed of an ATP-binding protein (A component, CbiO), a transmembrane protein (T component, CbiQ) and 2 possible substrate-capture proteins (S components, CbiM and CbiN) of unknown stoichimetry.

The protein resides in the cell inner membrane. It participates in cofactor biosynthesis; adenosylcobalamin biosynthesis. Part of the energy-coupling factor (ECF) transporter complex CbiMNOQ involved in cobalt import. The chain is Cobalt transport protein CbiN from Klebsiella pneumoniae (strain 342).